Here is a 157-residue protein sequence, read N- to C-terminus: MNILMLTFIICGLLTQVTKGSFEPQKCWKNNIGHCRRRCLDTERCILLCRNKLSCCIYIIISHEYTQRPAFPMIHLEDITFDYSDVDSFTGSPVSMLNDLITFDTTKFGETMTPETNTPETTVPPSETTTPETTMPPSETATSETMPPPSQTALTHN.

A signal peptide spans 1–20 (MNILMLTFIICGLLTQVTKG). 3 disulfide bridges follow: Cys27–Cys55, Cys35–Cys49, and Cys39–Cys56. The tract at residues 109-157 (GETMTPETNTPETTVPPSETTTPETTMPPSETATSETMPPPSQTALTHN) is disordered. Over residues 110–145 (ETMTPETNTPETTVPPSETTTPETTMPPSETATSET) the composition is skewed to low complexity.

Belongs to the beta-defensin family.

The protein resides in the secreted. Functionally, has antibacterial activity. This chain is Beta-defensin 125 (DEFB125), found in Gorilla gorilla gorilla (Western lowland gorilla).